The sequence spans 410 residues: Argininosuccinate synthase (410 aa).

ATP contacts are provided by residues 14–22 (AYSGGLDTS) and Ala41. L-citrulline is bound by residues Tyr92 and Ser97. An ATP-binding site is contributed by Gly122. Residues Thr124, Asn128, and Asp129 each coordinate L-aspartate. Asn128 contributes to the L-citrulline binding site. Residues Arg132, Ser183, Ser192, Glu268, and Tyr280 each contribute to the L-citrulline site.

This sequence belongs to the argininosuccinate synthase family. Type 1 subfamily. In terms of assembly, homotetramer.

The protein resides in the cytoplasm. The catalysed reaction is L-citrulline + L-aspartate + ATP = 2-(N(omega)-L-arginino)succinate + AMP + diphosphate + H(+). Its pathway is amino-acid biosynthesis; L-arginine biosynthesis; L-arginine from L-ornithine and carbamoyl phosphate: step 2/3. The chain is Argininosuccinate synthase from Parvibaculum lavamentivorans (strain DS-1 / DSM 13023 / NCIMB 13966).